We begin with the raw amino-acid sequence, 175 residues long: MSRRGVTVWFTGLSGAGKTTLSCGVAQQLRAWGLPVEVLDGDLVRQHLTKGLGFSKVDREENIRRIGFVAEMLTRHGVIVLVSAISPYRAARQEVRRYIGSFIEVFVDAPLEVCERRDVKGLYRKARAGLIQHFTGIDDPYEPPEQPEVVCKTAEQSIPECIDLVIQSLKSRGYV.

12–19 lines the ATP pocket; that stretch reads GLSGAGKT. Catalysis depends on Ser86, which acts as the Phosphoserine intermediate.

Belongs to the APS kinase family.

It carries out the reaction adenosine 5'-phosphosulfate + ATP = 3'-phosphoadenylyl sulfate + ADP + H(+). The protein operates within sulfur metabolism; hydrogen sulfide biosynthesis; sulfite from sulfate: step 2/3. In terms of biological role, catalyzes the synthesis of activated sulfate. The protein is Adenylyl-sulfate kinase of Synechococcus sp. (strain JA-2-3B'a(2-13)) (Cyanobacteria bacterium Yellowstone B-Prime).